We begin with the raw amino-acid sequence, 311 residues long: Oligopeptide transport system permease protein OppC (311 aa).

The Cytoplasmic segment spans residues 1–48 (MTDYRTQPINQKNADFVEQVADRIEEMQLEGRSLWQDAKRRFFRNKAA). Residues 49-69 (VASLIILAFIIIFITVAPWFF) traverse the membrane as a helical segment. Topologically, residues 70-113 (PFTYEDTDWNMMSAAPTMEGYHFFGTDASGRDLLVRTAIGGRIS) are periplasmic. The 190-residue stretch at 110 to 299 (GRISLLVGIA…LTLFCFNFIG (190 aa)) folds into the ABC transmembrane type-1 domain. The chain crosses the membrane as a helical span at residues 114–134 (LLVGIAGAFISVTIGTIYGAI). Over 135-146 (SGYVGGKTDMLM) the chain is Cytoplasmic. Residues 147-169 (MRFLEILSSFPFMFFVILLVTLF) form a helical membrane-spanning segment. The Periplasmic portion of the chain corresponds to 170–172 (GQN). The helical transmembrane segment at 173–192 (IFLIFIAIGAIAWLGLARIV) threads the bilayer. At 193-222 (RGQTLSLKNKEFVEAAIVCGVPRRQIILKH) the chain is on the cytoplasmic side. A helical transmembrane segment spans residues 223–243 (IIPNVLGLVAVYASLEVPGLI). Topologically, residues 244–278 (LFESFLSFLGLGTQEPMSSWGALLSDGAAQMEVSP) are periplasmic. Residues 279 to 299 (WLLIFPAFFLCLTLFCFNFIG) form a helical membrane-spanning segment. Over 300–311 (DGLRDALDPKDR) the chain is Cytoplasmic.

This sequence belongs to the binding-protein-dependent transport system permease family. OppBC subfamily. As to quaternary structure, the complex is composed of two ATP-binding proteins (OppD and OppF), two transmembrane proteins (OppB and OppC) and a solute-binding protein (OppA).

Its subcellular location is the cell inner membrane. Its function is as follows. Part of the ABC transporter complex OppABCDF involved in the uptake of oligopeptides. Probably responsible for the translocation of the substrate across the membrane. This chain is Oligopeptide transport system permease protein OppC (oppC), found in Haemophilus influenzae (strain ATCC 51907 / DSM 11121 / KW20 / Rd).